We begin with the raw amino-acid sequence, 285 residues long: MTNAITGAAIVGGVCGQPIKHSMSPVIHNAWIAAAGLDAAYVPFAPAADRFETFVDGLRGGAVRGLNVTIPFKERALAVADTASDLARMAGAANLLVFNEDGSVHADNTDGPGLLGAIAIQAPGFDVTAAPVVILGAGGAARGAVAALLLAGAPRIAVVNRTVARAQDLADTFGEKVVAKGEDALPALLPEAGLIINATSLGLGGGAGPSADLTLTPKTAVVMDMVYKPLRTEFLRRAEAAGRRTVDGLEMLLRQAIPTFETIYGQAPSPKIDVRVLALKLLGEV.

Shikimate is bound by residues S22 to S24 and T69. Catalysis depends on K73, which acts as the Proton acceptor. NADP(+) is bound at residue D85. Shikimate is bound by residues N94 and D110. NADP(+)-binding positions include G136–A140, N160–R165, and M225. Y227 serves as a coordination point for shikimate. Position 248 (G248) interacts with NADP(+).

It belongs to the shikimate dehydrogenase family. As to quaternary structure, homodimer.

The catalysed reaction is shikimate + NADP(+) = 3-dehydroshikimate + NADPH + H(+). Its pathway is metabolic intermediate biosynthesis; chorismate biosynthesis; chorismate from D-erythrose 4-phosphate and phosphoenolpyruvate: step 4/7. In terms of biological role, involved in the biosynthesis of the chorismate, which leads to the biosynthesis of aromatic amino acids. Catalyzes the reversible NADPH linked reduction of 3-dehydroshikimate (DHSA) to yield shikimate (SA). This chain is Shikimate dehydrogenase (NADP(+)), found in Caulobacter vibrioides (strain ATCC 19089 / CIP 103742 / CB 15) (Caulobacter crescentus).